The chain runs to 1096 residues: DNA-directed RNA polymerase subunit beta (1096 aa).

Belongs to the RNA polymerase beta chain family. In terms of assembly, in plastids the minimal PEP RNA polymerase catalytic core is composed of four subunits: alpha, beta, beta', and beta''. When a (nuclear-encoded) sigma factor is associated with the core the holoenzyme is formed, which can initiate transcription.

Its subcellular location is the plastid. It localises to the chloroplast. The catalysed reaction is RNA(n) + a ribonucleoside 5'-triphosphate = RNA(n+1) + diphosphate. Its function is as follows. DNA-dependent RNA polymerase catalyzes the transcription of DNA into RNA using the four ribonucleoside triphosphates as substrates. This is DNA-directed RNA polymerase subunit beta from Guillardia theta (Cryptophyte).